Here is a 295-residue protein sequence, read N- to C-terminus: Zinc finger CCCH domain-containing protein 44 (295 aa).

Positions 1–31 (MEAGGGKRAAPEGTNGAAKRARASESSQVGV) are disordered. C3H1-type zinc fingers lie at residues 32–60 (GSKLKPCTKFFSTSGCPFGSSCHFLHNFP) and 98–126 (SVKTRMCNKYNTAEGCKWGSKCHFAHGER). Residues 166–230 (SATAKISVDA…DQIKHASAMV (65 aa)) form the KH domain. The C3H1-type 3 zinc finger occupies 259–286 (NFKTKLCENFNKGSCTFGDRCHFAHGES).

The sequence is that of Zinc finger CCCH domain-containing protein 44 from Oryza sativa subsp. japonica (Rice).